Here is a 500-residue protein sequence, read N- to C-terminus: Potassium voltage-gated channel subfamily V member 1 (500 aa).

The Cytoplasmic segment spans residues 1–210; that stretch reads MPSSGRALLD…EKPGSSTAAR (210 aa). Residues 168–181 are compositionally biased toward basic and acidic residues; the sequence is KKDTEDQESQHESE. Residues 168–189 form a disordered region; it reads KKDTEDQESQHESEQDFSQGPC. Residues 211–231 traverse the membrane as a helical segment; the sequence is IFGVISIIFVVVSIINMALMS. Residues 232-238 are Extracellular-facing; sequence AELSWLD. Residues 239–259 form a helical membrane-spanning segment; sequence LQLLEILEYVCISWFTGEFVL. The Cytoplasmic portion of the chain corresponds to 260 to 276; the sequence is RFLCVRDRCRFLRKVPN. Residues 277-297 form a helical membrane-spanning segment; sequence IIDLLAILPFYITLLVESLSG. Topologically, residues 298-309 are extracellular; sequence SQTTQELENVGR. The helical; Voltage-sensor transmembrane segment at 310-331 threads the bilayer; it reads IVQVLRLLRALRMLKLGRHSTG. The Cytoplasmic portion of the chain corresponds to 332–345; it reads LRSLGMTITQCYEE. Residues 346 to 366 traverse the membrane as a helical segment; the sequence is VGLLLLFLSVGISIFSTVEYF. The Selectivity filter motif lies at 392–397; the sequence is TVGYGD. A helical membrane pass occupies residues 407 to 427; that stretch reads IVAFMCILSGILVLALPIAII. Residues 428 to 500 are Cytoplasmic-facing; the sequence is NDRFSACYFT…RSSGGDDFWF (73 aa).

This sequence belongs to the potassium channel family. V (TC 1.A.1.2) subfamily. Kv8.1/KCNV1 sub-subfamily. As to quaternary structure, heteromultimer with KCNB1 and KCNB2. Interacts with KCNC4 and KCND1. Detected in brain.

It localises to the cell membrane. Potassium channel subunit that does not form functional channels by itself. Modulates KCNB1 and KCNB2 channel activity by shifting the threshold for inactivation to more negative values and by slowing the rate of inactivation. Can down-regulate the channel activity of KCNB1, KCNB2, KCNC4 and KCND1, possibly by trapping them in intracellular membranes. The protein is Potassium voltage-gated channel subfamily V member 1 (KCNV1) of Homo sapiens (Human).